We begin with the raw amino-acid sequence, 393 residues long: Formate-dependent phosphoribosylglycinamide formyltransferase (393 aa).

N(1)-(5-phospho-beta-D-ribosyl)glycinamide contacts are provided by residues 22-23 and Glu-82; that span reads EL. Residues Arg-114, Lys-155, 160-165, 195-198, and Glu-203 contribute to the ATP site; these read SSGKGQ and ESFV. One can recognise an ATP-grasp domain in the interval 119–308; the sequence is RLAAEEVGLK…EFALHVRAIL (190 aa). Residues Glu-267 and Glu-279 each contribute to the Mg(2+) site. N(1)-(5-phospho-beta-D-ribosyl)glycinamide-binding positions include Asp-286, Lys-356, and 363-364; that span reads RR.

It belongs to the PurK/PurT family. As to quaternary structure, homodimer.

The enzyme catalyses N(1)-(5-phospho-beta-D-ribosyl)glycinamide + formate + ATP = N(2)-formyl-N(1)-(5-phospho-beta-D-ribosyl)glycinamide + ADP + phosphate + H(+). Its pathway is purine metabolism; IMP biosynthesis via de novo pathway; N(2)-formyl-N(1)-(5-phospho-D-ribosyl)glycinamide from N(1)-(5-phospho-D-ribosyl)glycinamide (formate route): step 1/1. Involved in the de novo purine biosynthesis. Catalyzes the transfer of formate to 5-phospho-ribosyl-glycinamide (GAR), producing 5-phospho-ribosyl-N-formylglycinamide (FGAR). Formate is provided by PurU via hydrolysis of 10-formyl-tetrahydrofolate. The polypeptide is Formate-dependent phosphoribosylglycinamide formyltransferase (Maridesulfovibrio salexigens (strain ATCC 14822 / DSM 2638 / NCIMB 8403 / VKM B-1763) (Desulfovibrio salexigens)).